The sequence spans 127 residues: Protein chibby homolog 1 (127 aa).

Residues 1–25 (MPLFGSIFSPKKTPPRKSASLSNLH) form a disordered region. Phosphoserine is present on residues serine 9 and serine 20. The tract at residues 60-112 (VADSVISGGVDRRETQRLRKRNQQLEEENNLLRLKVDILLDMLSETTAESHLK) is minimal region for the interaction with PKD2. Residues 68 to 110 (GVDRRETQRLRKRNQQLEEENNLLRLKVDILLDMLSETTAESH) are a coiled coil. Residues 77–98 (LRKRNQQLEEENNLLRLKVDIL) form a leucine-zipper; mediates homodimerization region.

This sequence belongs to the chibby family. As to quaternary structure, homodimer. Homodimerization is essential for nuclear localization and interaction with KPNA4 but is dispensable for interaction with CTNNB1. Interacts with polycystin-2/PKD2 and GM130. Interacts with the C-terminal region of CTNNB1. Interacts (C-terminus) with TCIM (C-terminus), TCIM competes with CTNNB1 for the interaction with CBY1. Interacts with FAM92A; this interaction facilitates targeting of FAM92A to cilium basal body. Interacts with CIBAR2. Interacts with KPNA4.

It is found in the nucleus speckle. Its subcellular location is the cytoplasm. It localises to the cytoskeleton. The protein localises to the cilium basal body. The protein resides in the microtubule organizing center. It is found in the centrosome. Its subcellular location is the centriole. It localises to the golgi apparatus. The protein localises to the trans-Golgi network. The protein resides in the cell projection. It is found in the cilium. Its subcellular location is the flagellum. It localises to the nucleus. Inhibits the Wnt/Wingless pathway by binding to CTNNB1/beta-catenin and inhibiting beta-catenin-mediated transcriptional activation through competition with TCF/LEF transcription factors. Has also been shown to play a role in regulating the intracellular trafficking of polycystin-2/PKD2 and possibly of other intracellular proteins. Promotes adipocyte and cardiomyocyte differentiation. The polypeptide is Protein chibby homolog 1 (Cby1) (Rattus norvegicus (Rat)).